A 120-amino-acid chain; its full sequence is Large ribosomal subunit protein uL18 (120 aa).

This sequence belongs to the universal ribosomal protein uL18 family. As to quaternary structure, part of the 50S ribosomal subunit; part of the 5S rRNA/L5/L18/L25 subcomplex. Contacts the 5S and 23S rRNAs.

Its function is as follows. This is one of the proteins that bind and probably mediate the attachment of the 5S RNA into the large ribosomal subunit, where it forms part of the central protuberance. This Brucella anthropi (strain ATCC 49188 / DSM 6882 / CCUG 24695 / JCM 21032 / LMG 3331 / NBRC 15819 / NCTC 12168 / Alc 37) (Ochrobactrum anthropi) protein is Large ribosomal subunit protein uL18.